A 113-amino-acid chain; its full sequence is Cholecystoxin (113 aa).

Residues 1-20 form the signal peptide; sequence MYGGICLCVLLAVLAISSSG. Positions 21–79 are excised as a propeptide; it reads QHISRSLNGNSLAAAIEQNFPEKHRPARTPDSNQRVESNIDEKANLGVLLARYLQKARR. The segment at 77–97 is disordered; sequence ARRGTNGKPPDPKKESQDYLG. Tyr-95 bears the Sulfotyrosine mark. Phe-101 is modified (phenylalanine amide). The propeptide occupies 102-113; that stretch reads GRRSAEEYEYSS.

Belongs to the gastrin/cholecystokinin family. As to expression, expressed by the mandibular venom gland.

It is found in the secreted. In terms of biological role, cholecystokinin-22: hypotensive neuropeptide that binds cholecystokinin receptor type A receptor (CCKAR). Its function is as follows. Cholecystokinin-8: hypotensive neuropeptide that binds cholecystokinin receptor type A receptor (CCKAR). This Varanus varius (Lace monitor lizard) protein is Cholecystoxin.